The following is a 215-amino-acid chain: 3,4-dihydroxy-2-butanone 4-phosphate synthase (215 aa).

Residues 37 to 38 (RE), Asp-42, 150 to 154 (RPGHT), and Glu-174 contribute to the D-ribulose 5-phosphate site. Position 38 (Glu-38) interacts with Mg(2+). A Mg(2+)-binding site is contributed by His-153.

The protein belongs to the DHBP synthase family. In terms of assembly, homodimer. Mg(2+) serves as cofactor. Mn(2+) is required as a cofactor.

It catalyses the reaction D-ribulose 5-phosphate = (2S)-2-hydroxy-3-oxobutyl phosphate + formate + H(+). It functions in the pathway cofactor biosynthesis; riboflavin biosynthesis; 2-hydroxy-3-oxobutyl phosphate from D-ribulose 5-phosphate: step 1/1. Functionally, catalyzes the conversion of D-ribulose 5-phosphate to formate and 3,4-dihydroxy-2-butanone 4-phosphate. In Buchnera aphidicola subsp. Acyrthosiphon pisum (strain 5A), this protein is 3,4-dihydroxy-2-butanone 4-phosphate synthase.